The chain runs to 1497 residues: Polyunsaturated fatty acid synthase subunit C (1497 aa).

Dehydratase (DH) domain stretches follow at residues 271-422 (YKLC…DYGK) and 797-937 (QGQY…RVRI). Low complexity predominate over residues 944–958 (ASSSASSVGSSASAE). A disordered region spans residues 944-977 (ASSSASSVGSSASAEVAERTRSKAAPQPVASGPA). Residues 1026-1470 (LGDLGDRSFM…ILRGACYLRR (445 aa)) form an enoylreductase (ER) domain region.

It belongs to the thioester dehydratase family. FabA subfamily. In terms of assembly, component of the polyunsaturated fatty acid synthase complex composed of at least ORF-A, ORF-B and ORF-C.

Its pathway is lipid metabolism; fatty acid biosynthesis. In terms of biological role, polyketide synthase-like protein; part of the polyunsaturated fatty acid synthase composed of the 3 PKS-like subunits A, B and C. While the saturated fatty acids (SFAs) in Thraustochytrium are produced by the conventional fatty acid synthase (FAS) pathway, polyunsaturated fatty acids (PUFAs) including docosahexeanoic acid (DHA) and docosapentaenoic acid (DPA) are synthesized via an anaerobical PKS pathway. PUFA synthase assimilates fatty acyl-CoA, the product of FAS, as the starter unit to synthesize DPA, and this starter unit may be butyryl-CoA, hexanoyl-CoA, or octanoyl-CoA. DPA and DHA biosynthesis seem to differ by the reduction at the N-3 position by PUFA synthase, not the extension of carbon chain. In DHA biosynthesis, PUFA synthase extends the fatty acyl chain from the methyl toward the carboxyl end, and the double bond is formed when the carbon chain is growing, instead of afterward. Therefore, PUFA synthase is unable to transform DPA to DHA, suggesting that DPA is not the precursor of DHA. Moreover, DPA molecule is partly extended by FAS KS domain, so DPA biosynthesis is less dependent on PUFA synthase KS domain than DHA. The sequence is that of Polyunsaturated fatty acid synthase subunit C from Thraustochytrium sp. (strain ATCC 26185 / S-3).